The primary structure comprises 156 residues: UPF0756 membrane protein Exig_2210 (156 aa).

A run of 5 helical transmembrane segments spans residues 5–25 (LFLIGLVLIGVIAQNKSLIIA), 52–72 (WGVTLITAAILVPIATGDIGF), 83–103 (IGIISFLAGIFVAIIAAHGVG), 109–129 (PLVTTALLAGTILAVGLFRGV), and 131–151 (VGPLIGAGIAALVIGMWDIIV).

Belongs to the UPF0756 family.

The protein resides in the cell membrane. The chain is UPF0756 membrane protein Exig_2210 from Exiguobacterium sibiricum (strain DSM 17290 / CCUG 55495 / CIP 109462 / JCM 13490 / 255-15).